The chain runs to 81 residues: Serine/arginine-rich splicing factor 6 (81 aa).

Residues 1–48 (RSRSRSRRSSRSRSRSISKSRSRSRSRSKGRSRSRSKGRKSRSKSKSK) show a composition bias toward basic residues. The interval 1-81 (RSRSRSRRSS…SRSRSRSRSP (81 aa)) is disordered. Residues 62–71 (RSKDEYEKSR) show a composition bias toward basic and acidic residues. Basic residues predominate over residues 72–81 (SRSRSRSRSP).

The protein belongs to the splicing factor SR family. Binds SREK1/SFRS12. Interacts with DYRK1A. Post-translationally, extensively phosphorylated on serine residues in the RS domain. Phosphorylated by DYRK1A, probably in the RS domain. Phosphorylation by DYRK1A modulates alternative splice site selection and inhibits the expression of MAPT/Tau exon 10.

It localises to the nucleus. The protein resides in the nucleus speckle. In terms of biological role, plays a role in constitutive splicing and modulates the selection of alternative splice sites. Plays a role in the alternative splicing of MAPT/Tau exon 10. Binds to alternative exons of TNC pre-mRNA and promotes the expression of alternatively spliced TNC. Plays a role in wound healing and in the regulation of keratinocyte differentiation and proliferation via its role in alternative splicing. The protein is Serine/arginine-rich splicing factor 6 (SRSF6) of Oryctolagus cuniculus (Rabbit).